The following is a 475-amino-acid chain: Aspartyl/glutamyl-tRNA(Asn/Gln) amidotransferase subunit B (475 aa).

Belongs to the GatB/GatE family. GatB subfamily. In terms of assembly, heterotrimer of A, B and C subunits.

The catalysed reaction is L-glutamyl-tRNA(Gln) + L-glutamine + ATP + H2O = L-glutaminyl-tRNA(Gln) + L-glutamate + ADP + phosphate + H(+). It carries out the reaction L-aspartyl-tRNA(Asn) + L-glutamine + ATP + H2O = L-asparaginyl-tRNA(Asn) + L-glutamate + ADP + phosphate + 2 H(+). Its function is as follows. Allows the formation of correctly charged Asn-tRNA(Asn) or Gln-tRNA(Gln) through the transamidation of misacylated Asp-tRNA(Asn) or Glu-tRNA(Gln) in organisms which lack either or both of asparaginyl-tRNA or glutaminyl-tRNA synthetases. The reaction takes place in the presence of glutamine and ATP through an activated phospho-Asp-tRNA(Asn) or phospho-Glu-tRNA(Gln). The polypeptide is Aspartyl/glutamyl-tRNA(Asn/Gln) amidotransferase subunit B (Pelodictyon phaeoclathratiforme (strain DSM 5477 / BU-1)).